The primary structure comprises 608 residues: Growth hormone receptor (608 aa).

An N-terminal signal peptide occupies residues 1 to 16 (MDLRHLLFTLALVCAN). At 17–237 (DSLSASDDLL…EFVHCAEEIE (221 aa)) the chain is on the extracellular side. Disulfide bonds link C34-C44 and C72-C83. The N-linked (GlcNAc...) asparagine glycan is linked to N86. A disulfide bridge connects residues C97 and C111. The region spanning 122–226 (PPVHLNWTLL…ILYVSFTQAG (105 aa)) is the Fibronectin type-III domain. Residues N127, N132, and N171 are each glycosylated (N-linked (GlcNAc...) asparagine). A WSXWS motif motif is present at residues 211–215 (FGEFS). Residues 238-261 (FPWFLVVVFGVCGLAVTAILILLS) form a helical membrane-spanning segment. Residues 262-608 (KQPRLKMLIF…STDQLNKIMP (347 aa)) are Cytoplasmic-facing. Residues 267–352 (KMLIFPPVPV…HLKSHSCLGA (86 aa)) form a required for JAK2 binding region. The Box 1 motif motif lies at 270–278 (IFPPVPVPK). The UbE motif motif lies at 313 to 322 (DLWVEFIELD). 2 stretches are compositionally biased toward polar residues: residues 413–426 (ANTD…STQS) and 438–451 (STDS…TQLS). The tract at residues 413–451 (ANTDTQQPHTSTQSESRESWPPFADSTDSANPSVQTQLS) is disordered.

This sequence belongs to the type I cytokine receptor family. Type 1 subfamily. In terms of processing, on GH binding, proteolytically cleaved, in vitro, to produce GHBP. As to expression, broad specificity.

The protein resides in the cell membrane. Its subcellular location is the secreted. Receptor for pituitary gland growth hormone (GH1) involved in regulating postnatal body growth. On ligand binding, couples to the JAK2/STAT5 pathway. In terms of biological role, the soluble form (GHBP) acts as a reservoir of growth hormone in plasma and may be a modulator/inhibitor of GH signaling. This is Growth hormone receptor (GHR) from Gallus gallus (Chicken).